A 478-amino-acid polypeptide reads, in one-letter code: Protein adenylyltransferase VbhT (478 aa).

Residues 55–200 (FDLDHMKKIH…RRNLTEFTVN (146 aa)) form the Fido domain. Residues 85–88 (KDNS), 133–136 (NALH), 140–147 (EGNGRTLR), and Ser-175 each bind ATP.

Homodimer. Interacts with VbhA.

It carries out the reaction L-tyrosyl-[protein] + ATP = O-(5'-adenylyl)-L-tyrosyl-[protein] + diphosphate. The catalysed reaction is L-threonyl-[protein] + ATP = 3-O-(5'-adenylyl)-L-threonyl-[protein] + diphosphate. With respect to regulation, adenylyltransferase activity is inhibited by antitoxin VbhA; which acts by competing with ATP-binding at Arg-147 and prevents productive ATP-binding. Toxic component of type II toxin-antitoxin (TA) system VbhT-VbhA. Adenylyltransferase involved in virulence by mediating the addition of adenosine 5'-monophosphate (AMP) to specific residue of host GTPases. The resulting AMPylation affects GTPases, impairing actin assembly in infected cells. The chain is Protein adenylyltransferase VbhT (vbhT) from Bartonella schoenbuchensis (strain DSM 13525 / NCTC 13165 / R1).